Here is a 243-residue protein sequence, read N- to C-terminus: Complement C1q tumor necrosis factor-related protein 5 (243 aa).

The N-terminal stretch at 1–15 is a signal peptide; sequence MRPLLVLLLLGLAAG. The interval 15–125 is disordered; the sequence is GSPPLDDNKI…PPPSDAPLPF (111 aa). The region spanning 30–95 is the Collagen-like domain; it reads GHPGLPGTPG…AGPAGPTGPA (66 aa). Residues 83–96 show a composition bias toward low complexity; it reads RGEAGPAGPTGPAG. Positions 99 to 238 constitute a C1q domain; that stretch reads SVPPRSAFSA…GFLVYSDWHS (140 aa).

In terms of assembly, may interact with ERFE. Homotrimer (via collagen-like domain). May form higher order oligomers by supercoiling of the trimers.

It localises to the secreted. The sequence is that of Complement C1q tumor necrosis factor-related protein 5 (C1QTNF5) from Homo sapiens (Human).